We begin with the raw amino-acid sequence, 248 residues long: 2,3-bisphosphoglycerate-dependent phosphoglycerate mutase (248 aa).

Substrate is bound by residues 8 to 15 (RHGESIWN), 21 to 22 (TG), arginine 60, 87 to 90 (EKHY), lysine 98, 114 to 115 (RR), and 183 to 184 (GN). Histidine 9 functions as the Tele-phosphohistidine intermediate in the catalytic mechanism. Glutamate 87 (proton donor/acceptor) is an active-site residue.

The protein belongs to the phosphoglycerate mutase family. BPG-dependent PGAM subfamily.

It catalyses the reaction (2R)-2-phosphoglycerate = (2R)-3-phosphoglycerate. It participates in carbohydrate degradation; glycolysis; pyruvate from D-glyceraldehyde 3-phosphate: step 3/5. In terms of biological role, catalyzes the interconversion of 2-phosphoglycerate and 3-phosphoglycerate. This is 2,3-bisphosphoglycerate-dependent phosphoglycerate mutase from Parabacteroides distasonis (strain ATCC 8503 / DSM 20701 / CIP 104284 / JCM 5825 / NCTC 11152).